A 248-amino-acid polypeptide reads, in one-letter code: Triosephosphate isomerase B (248 aa).

Substrate is bound by residues Asn-11 and Lys-13. His-95 acts as the Electrophile in catalysis. Glu-165 (proton acceptor) is an active-site residue.

This sequence belongs to the triosephosphate isomerase family. As to quaternary structure, homodimer.

Its subcellular location is the cytoplasm. The enzyme catalyses dihydroxyacetone phosphate = methylglyoxal + phosphate. It carries out the reaction D-glyceraldehyde 3-phosphate = dihydroxyacetone phosphate. The protein operates within carbohydrate degradation; glycolysis; D-glyceraldehyde 3-phosphate from glycerone phosphate: step 1/1. Its pathway is carbohydrate biosynthesis; gluconeogenesis. Functionally, triosephosphate isomerase is an extremely efficient metabolic enzyme that catalyzes the interconversion between dihydroxyacetone phosphate (DHAP) and D-glyceraldehyde-3-phosphate (G3P) in glycolysis and gluconeogenesis. In terms of biological role, it is also responsible for the non-negligible production of methylglyoxal a reactive cytotoxic side-product that modifies and can alter proteins, DNA and lipids. The polypeptide is Triosephosphate isomerase B (tpi1b) (Danio rerio (Zebrafish)).